Reading from the N-terminus, the 190-residue chain is MSSFTTTNTPPPYLLRKIYHRRVNQPFSVVCCTGEPQQDIFTRRRTLTSLITFTVIGGATSSALAQEKWGTRSFIKEKYFMPGLSPEDAAARIKQTAEGLRDMREMLDHMSWRYVIFYIRLKQAYLSQDLTNAMNILPESRRNDYVQAANELVENMSELDFYVRTPKVYESYLYYEKTLKSIDNVVEFLA.

The transit peptide at 1-31 (MSSFTTTNTPPPYLLRKIYHRRVNQPFSVVC) directs the protein to the chloroplast. The transit peptide at 32–68 (CTGEPQQDIFTRRRTLTSLITFTVIGGATSSALAQEK) directs the protein to the thylakoid. Coiled coils occupy residues 87 to 107 (EDAA…REML) and 139 to 159 (ESRR…MSEL).

The protein belongs to the PsbQ family. Part of the chloroplast NDH complex, composed of a mixture of chloroplast and nucleus encoded subunits. Component of the NDH lumenal subcomplex, at least composed of PnsL1, PnsL2, PnsL3, PnsL4 and PnsL5.

The protein resides in the plastid. Its subcellular location is the chloroplast thylakoid membrane. Functionally, NDH shuttles electrons from NAD(P)H:plastoquinone, via FMN and iron-sulfur (Fe-S) centers, to quinones in the photosynthetic chain and possibly in a chloroplast respiratory chain. The immediate electron acceptor for the enzyme in this species is believed to be plastoquinone. Couples the redox reaction to proton translocation, and thus conserves the redox energy in a proton gradient. Required for both formation and activity of the chloroplast NAD(P)H dehydrogenase (NDH) complex. The protein is Photosynthetic NDH subunit of lumenal location 2, chloroplastic of Arabidopsis thaliana (Mouse-ear cress).